The following is a 472-amino-acid chain: Ras-GEF domain-containing family member 1B (472 aa).

In terms of domain architecture, N-terminal Ras-GEF spans 34–164 (QDNNLLSGSL…IIQNLIRKLA (131 aa)). Residues 204–452 (DPYTVAQQLT…YLASYESEGP (249 aa)) form the Ras-GEF domain.

In terms of biological role, guanine nucleotide exchange factor (GEF) with specificity for rap2a and other Ras family proteins (in vitro). The chain is Ras-GEF domain-containing family member 1B (rasgef1b) from Xenopus tropicalis (Western clawed frog).